A 299-amino-acid polypeptide reads, in one-letter code: ATP phosphoribosyltransferase (299 aa).

It belongs to the ATP phosphoribosyltransferase family. Long subfamily. In terms of assembly, equilibrium between an active dimeric form, an inactive hexameric form and higher aggregates. Interconversion between the various forms is largely reversible and is influenced by the natural substrates and inhibitors of the enzyme. Mg(2+) serves as cofactor.

The protein resides in the cytoplasm. The enzyme catalyses 1-(5-phospho-beta-D-ribosyl)-ATP + diphosphate = 5-phospho-alpha-D-ribose 1-diphosphate + ATP. Its pathway is amino-acid biosynthesis; L-histidine biosynthesis; L-histidine from 5-phospho-alpha-D-ribose 1-diphosphate: step 1/9. Feedback inhibited by histidine. Functionally, catalyzes the condensation of ATP and 5-phosphoribose 1-diphosphate to form N'-(5'-phosphoribosyl)-ATP (PR-ATP). Has a crucial role in the pathway because the rate of histidine biosynthesis seems to be controlled primarily by regulation of HisG enzymatic activity. The sequence is that of ATP phosphoribosyltransferase from Escherichia fergusonii (strain ATCC 35469 / DSM 13698 / CCUG 18766 / IAM 14443 / JCM 21226 / LMG 7866 / NBRC 102419 / NCTC 12128 / CDC 0568-73).